The sequence spans 957 residues: Atromentin synthetase (957 aa).

Residues 59 to 464 form an adenylation (A) domain region; it reads SVQARTFQDF…SGRIKDTVIV (406 aa). The Carrier domain occupies 596–674; sequence TPSTDDEKAL…DLAKYVNGLV (79 aa). The tract at residues 601–671 is thiolation and peptide carrier (T) domain; sequence DEKALAAIYA…IVSDLAKYVN (71 aa). Residue serine 633 is modified to O-(pantetheine 4'-phosphoryl)serine. The thioesterase (TE) domain stretch occupies residues 697-947; that stretch reads PIFFVHPGVG…FDHVPQFQKI (251 aa).

It belongs to the ATP-dependent AMP-binding enzyme family.

It functions in the pathway secondary metabolite biosynthesis. Its function is as follows. The L-tyrosine:2-oxoglutarate aminotransferase atrD and the atromentin synthetase atrA catalyze consecutive steps to turn over L-tyrosine into atromentin, which represents the generic precursor molecule for the entire terphenylquinone and pulvinic acid family of pigments, which are widely distributed secondary metabolites in homobasidiomycetes. The first step is catalyzed by atrD which converts L-tyrosine in to 4-hydroxyphenylpyruvate (4-HPP). Adenylation of two 4-HPP monomers by the atrA adenylation (A) domain, ester bond formation between monomers and atrA, and symmetric C-C-bond formation between two monomers by atrA leads to atromentin. The polypeptide is Atromentin synthetase (Tapinella panuoides (Oyster rollrim mushroom)).